The sequence spans 706 residues: Dual specificity calcium/calmodulin-dependent 3',5'-cyclic nucleotide phosphodiesterase 1C (706 aa).

Residue Met1 is modified to N-acetylmethionine. The segment at 123-146 is calmodulin-binding; sequence EKPRFKSIVHAVQAGIFVERMYRR. One can recognise a PDEase domain in the interval 151–528; that stretch reads VGLSYPPAVI…ERWRAKVPKE (378 aa). The active-site Proton donor is His228. His232, His268, Asp269, and Asp376 together coordinate Zn(2+). Asp269 is a Mg(2+) binding site. Disordered regions lie at residues 453–497 and 524–655; these read LIDE…INNS and KVPK…IKPP. Composition is skewed to polar residues over residues 456 to 476 and 483 to 497; these read ESSQTGGTGQRRSSLNSINSS and VKSSGSDGSAPINNS. Basic and acidic residues-rich tracts occupy residues 524–554, 580–597, and 603–630; these read KVPKEEKAKKEAEEKARLAAEEKQKEMEAKS, RKGDNPRGKNSKGEKAGE, and DLKDGKNKADKKDHSNTGNESKKTDGTK. Polar residues predominate over residues 638 to 647; sequence APSTSSTSRI.

It belongs to the cyclic nucleotide phosphodiesterase family. PDE1 subfamily. As to quaternary structure, homodimer. The cofactor is Zn(2+). Mg(2+) serves as cofactor. In terms of tissue distribution, highly expressed in testis and at moderate levels in heart. Expressed at a moderate level in brain, the cerebellum, testis, heart and olfactory epithelium. As to expression, highly expressed in olfactory epithelium and at very low levels, if any, in other tissues. In the cochlea, expressed in the inner and outer hair cells (at protein level). In the brain, highly expressed in the neurons of the granule layer of the cerebellum, some Purkinje cells, the central amygdaloid nucleus, and the interpolar spinal trigem nucleus and, at moderate levels, in the glomerular and external plexiform layer of the olfactory bulb as well as in parts of the caudate-putamen and olfactory tubercle.

Its subcellular location is the lysosome. It carries out the reaction a nucleoside 3',5'-cyclic phosphate + H2O = a nucleoside 5'-phosphate + H(+). It catalyses the reaction 3',5'-cyclic GMP + H2O = GMP + H(+). The enzyme catalyses 3',5'-cyclic AMP + H2O = AMP + H(+). Type I PDE are activated by the binding of calmodulin in the presence of Ca(2+). Different splice variants may have different sensitivities to Ca(2+). With respect to regulation, exhibits a higher sensitivity to Ca(2+) stimulation than isoforms 1 and 2. Functionally, calmodulin-dependent cyclic nucleotide phosphodiesterase with a dual specificity for cAMP and cGMP, which are key regulators of many important physiological processes. Exhibits high affinity for both cAMP and cGMP. Modulates the amplitude and duration of the cAMP signal in sensory cilia in response to odorant stimulation, hence contributing to the generation of action potentials. Regulates smooth muscle cell proliferation. Regulates the stability of growth factor receptors, including PDGFRB. The chain is Dual specificity calcium/calmodulin-dependent 3',5'-cyclic nucleotide phosphodiesterase 1C from Mus musculus (Mouse).